Consider the following 435-residue polypeptide: Enolase (435 aa).

Gln167 is a binding site for (2R)-2-phosphoglycerate. Residue Glu209 is the Proton donor of the active site. Mg(2+) is bound by residues Asp246, Glu292, and Asp319. Positions 344, 373, 374, and 395 each coordinate (2R)-2-phosphoglycerate. The active-site Proton acceptor is Lys344.

Belongs to the enolase family. The cofactor is Mg(2+).

The protein resides in the cytoplasm. The protein localises to the secreted. Its subcellular location is the cell surface. It carries out the reaction (2R)-2-phosphoglycerate = phosphoenolpyruvate + H2O. Its pathway is carbohydrate degradation; glycolysis; pyruvate from D-glyceraldehyde 3-phosphate: step 4/5. Functionally, catalyzes the reversible conversion of 2-phosphoglycerate (2-PG) into phosphoenolpyruvate (PEP). It is essential for the degradation of carbohydrates via glycolysis. The chain is Enolase from Lachnospira eligens (strain ATCC 27750 / DSM 3376 / VPI C15-48 / C15-B4) (Eubacterium eligens).